The sequence spans 21 residues: Misgurin (21 aa).

Positions 1 to 21 (RQRVEELSKFSKKGAAARRRK) are disordered. Positions 10–21 (FSKKGAAARRRK) are enriched in basic residues.

Its subcellular location is the secreted. Strong antimicrobial activity against several Gram-positive and Gram-negative bacteria and fungi. The sequence is that of Misgurin from Misgurnus anguillicaudatus (Oriental weatherloach).